We begin with the raw amino-acid sequence, 357 residues long: P2Y purinoceptor 8 (357 aa).

Topologically, residues 1-26 are extracellular; sequence MVKNGSHLDAETLAMLQNKAISITLP. N-linked (GlcNAc...) asparagine glycosylation occurs at asparagine 4. The helical transmembrane segment at 27-47 threads the bilayer; it reads VVYTMVAIISIPGNFFSLWVL. Over 48-56 the chain is Cytoplasmic; the sequence is CWHIKPKTP. The chain crosses the membrane as a helical span at residues 57–77; sequence SVIFMINLSITDLLLACCFPF. Topologically, residues 78–97 are extracellular; it reads QIFYHIQRNHWIFGKTLCSL. Cysteines 95 and 174 form a disulfide. A helical membrane pass occupies residues 98–118; sequence VTVMFYSNMYSSILTMTCISI. Topologically, residues 119–137 are cytoplasmic; it reads ERYMGVVYPMKLIKWRRKR. Residues 138–158 traverse the membrane as a helical segment; the sequence is YALGACVIMWIFLLLAFYPLE. The Extracellular segment spans residues 159-185; sequence STDLTYEVKELGIITCFDVLKWEMLPN. Residues 186–206 form a helical membrane-spanning segment; sequence FAAWVAFLLTLFVVLFLIPFI. At 207 to 236 the chain is on the cytoplasmic side; it reads VTVGCYIGTIRKLIQTSSRYGNKQKTRSIY. Residues 237-257 traverse the membrane as a helical segment; it reads LAIIVLSVFITCFAPNNFILL. Topologically, residues 258-271 are extracellular; sequence AHMIVRLFYEGSLY. Residues 272–294 traverse the membrane as a helical segment; the sequence is PAYKLTLCLSCLNNCIDPFIYYF. At 295–357 the chain is on the cytoplasmic side; that stretch reads ASKEFYQKFM…ICLQRQESVF (63 aa).

Belongs to the G-protein coupled receptor 1 family.

Its subcellular location is the cell membrane. Its function is as follows. Probable receptor for purines coupled to G-proteins. The chain is P2Y purinoceptor 8 (P2RY8) from Gallus gallus (Chicken).